A 323-amino-acid polypeptide reads, in one-letter code: Fructose-1,6-bisphosphatase class 1 (323 aa).

4 residues coordinate Mg(2+): Glu84, Asp103, Leu105, and Asp106. Substrate is bound by residues Asp106–Ser109, Asn198, and Lys264. Glu270 is a binding site for Mg(2+).

This sequence belongs to the FBPase class 1 family. In terms of assembly, homotetramer. It depends on Mg(2+) as a cofactor.

The protein resides in the cytoplasm. The enzyme catalyses beta-D-fructose 1,6-bisphosphate + H2O = beta-D-fructose 6-phosphate + phosphate. It functions in the pathway carbohydrate biosynthesis; gluconeogenesis. The chain is Fructose-1,6-bisphosphatase class 1 from Pseudoalteromonas atlantica (strain T6c / ATCC BAA-1087).